The primary structure comprises 271 residues: Mannosyl-3-phosphoglycerate phosphatase (271 aa).

Asp13 (nucleophile) is an active-site residue. The Mg(2+) site is built by Asp13, Asp15, and Asp214.

It belongs to the HAD-like hydrolase superfamily. MPGP family. Mg(2+) serves as cofactor.

The protein resides in the cytoplasm. The catalysed reaction is 2-O-(alpha-D-mannosyl)-3-phosphoglycerate + H2O = (2R)-2-O-(alpha-D-mannosyl)-glycerate + phosphate. In Escherichia coli O45:K1 (strain S88 / ExPEC), this protein is Mannosyl-3-phosphoglycerate phosphatase.